The chain runs to 314 residues: tRNA pseudouridine synthase B (314 aa).

Histidine 43 contributes to the substrate binding site. The active-site Nucleophile is aspartate 48. Substrate is bound by residues tyrosine 76, tyrosine 179, and leucine 200.

Belongs to the pseudouridine synthase TruB family. Type 1 subfamily.

It carries out the reaction uridine(55) in tRNA = pseudouridine(55) in tRNA. Functionally, responsible for synthesis of pseudouridine from uracil-55 in the psi GC loop of transfer RNAs. This is tRNA pseudouridine synthase B from Shigella flexneri.